A 314-amino-acid chain; its full sequence is MTRTKVAIIGSGNIGTDLMIKVLRTSKHLEMGAMVGIDPASDGLARAGRFGVPTTAEGVEGLVALPGFDDIEIVFDATSAGAHVVNAARLLPLGKRLIDLTPAALGPFTIPAVNLEDHLEAPNLNMVTCGGQATIPIVAAISRVVPVEYAEIVASIASRSAGPGTRANIDEFTETTSSAIVEVGGATRGKAIIILNPAEPPLIMRDTVFALVTAADPDVHEQIRASVDKMVADVAAYVPGYRLKQAVQVTEIPADQPVHTLLAPDAERPTHQVSVFLEVEGAAHYLPAYAGNLDIMTSAALQVAERIAAGKADR.

An NAD(+)-binding site is contributed by 11-14 (SGNI). Catalysis depends on Cys129, which acts as the Acyl-thioester intermediate. NAD(+) is bound by residues 160–168 (SAGPGTRAN) and Asn292.

Belongs to the acetaldehyde dehydrogenase family.

The catalysed reaction is acetaldehyde + NAD(+) + CoA = acetyl-CoA + NADH + H(+). The polypeptide is Acetaldehyde dehydrogenase 1 (Nocardioides sp. (strain ATCC BAA-499 / JS614)).